The sequence spans 292 residues: Fat storage-inducing transmembrane protein 1 (292 aa).

The Lumenal portion of the chain corresponds to 1 to 18 (MERGPVVGAGRGAGARIR). The helical transmembrane segment at 19-39 (ALLGGLVRVLLWVASALLYFG) threads the bilayer. Residues 40–54 (SEQAARLLGSPCLRR) are Cytoplasmic-facing. Residues 55–75 (LYHAWLAAVVIFGPLLQFHVN) traverse the membrane as a helical segment. Over 76-94 (PRTIFASHGNFFNIKFVNS) the chain is Lumenal. The chain crosses the membrane as a helical span at residues 95 to 115 (AWGWTCTFLGGFVLLVVFLAT). Over 116–141 (RRVAVTARHLSRLVVGAAVWRGAGRA) the chain is Cytoplasmic. A helical membrane pass occupies residues 142–162 (FLLIEDLTGSCFEPLPQGLLL). At 163–187 (HELPDRRSCLAAGHQWRGYTVSSHT) the chain is on the lumenal side. Residue histidine 186 is part of the active site. The chain crosses the membrane as a helical span at residues 188-208 (FLLTFCCLLMAEEAAVFAKYL). The Cytoplasmic portion of the chain corresponds to 209-220 (AHGLPAGAPLRL). A helical transmembrane segment spans residues 221 to 241 (VFLLNVLLLGLWNFLLLCTVI). The Lumenal portion of the chain corresponds to 242–249 (YFHQYTHK). Residue histidine 244 is part of the active site. A helical membrane pass occupies residues 250–270 (VVGAAVGTFAWYLTYGSWYHQ). At 271 to 292 (PWSPGSPGHGLFPRPHSIHKHN) the chain is on the cytoplasmic side.

The protein belongs to the FIT family. FIT1 subfamily.

Its subcellular location is the endoplasmic reticulum membrane. In terms of biological role, plays an important role in the formation of lipid droplets (LDs) which are storage organelles at the center of lipid and energy homeostasis. Directly binds to diacylglycerol (DAGs) and triacylglycerol. The chain is Fat storage-inducing transmembrane protein 1 from Bos taurus (Bovine).